Reading from the N-terminus, the 118-residue chain is Large ribosomal subunit protein uL22 (118 aa).

The protein belongs to the universal ribosomal protein uL22 family. In terms of assembly, part of the 50S ribosomal subunit.

Its function is as follows. This protein binds specifically to 23S rRNA; its binding is stimulated by other ribosomal proteins, e.g. L4, L17, and L20. It is important during the early stages of 50S assembly. It makes multiple contacts with different domains of the 23S rRNA in the assembled 50S subunit and ribosome. The globular domain of the protein is located near the polypeptide exit tunnel on the outside of the subunit, while an extended beta-hairpin is found that lines the wall of the exit tunnel in the center of the 70S ribosome. This Thermomicrobium roseum (strain ATCC 27502 / DSM 5159 / P-2) protein is Large ribosomal subunit protein uL22.